Consider the following 407-residue polypeptide: Argininosuccinate synthase (407 aa).

Residues 16–24 (AYSGGLDTS) and Ala-44 contribute to the ATP site. L-citrulline-binding residues include Tyr-96 and Ser-101. Gly-126 provides a ligand contact to ATP. Residues Thr-128, Asn-132, and Asp-133 each contribute to the L-aspartate site. Asn-132 serves as a coordination point for L-citrulline. Positions 136, 185, 194, 270, and 282 each coordinate L-citrulline.

This sequence belongs to the argininosuccinate synthase family. Type 1 subfamily. In terms of assembly, homotetramer.

It is found in the cytoplasm. The enzyme catalyses L-citrulline + L-aspartate + ATP = 2-(N(omega)-L-arginino)succinate + AMP + diphosphate + H(+). It participates in amino-acid biosynthesis; L-arginine biosynthesis; L-arginine from L-ornithine and carbamoyl phosphate: step 2/3. The polypeptide is Argininosuccinate synthase (Shewanella sediminis (strain HAW-EB3)).